The primary structure comprises 325 residues: MNAFTQIDELVMPLPLEPQGYTIAPSKQSPRLLELTFARETVEAFVQAVAQWPVQALEYKSFLRFRIGEILDELCQGTLRPVLLNTILDRATGGMLITPIGLDDVSQAEDMVKFTTACAHLIGRSNYDAMSGQFYARFVVVNSDNSDSYLRQPHRVMELHNDGTFVNQITDYVLMLKIDEKNMEGGNSLLLHLDDWEQCEAFFRHPMARREMRWTAPPSKKVAEDVFHSVFDTDTEGRPTMRYIDQFVQPENYEEGIWLNALSESLEGSSKKVSVPVGVGSFLLINNLFWLHGRDRFTPHEGLRRELMRQRGYVAFPKPLYQRGQ.

Residues H160, D162, and H292 each contribute to the Fe cation site.

The protein belongs to the glutarate hydroxylase family. As to quaternary structure, homotetramer. Requires Fe(2+) as cofactor.

It catalyses the reaction glutarate + 2-oxoglutarate + O2 = (S)-2-hydroxyglutarate + succinate + CO2. The protein operates within amino-acid degradation. Its function is as follows. Acts as an alpha-ketoglutarate-dependent dioxygenase catalyzing hydroxylation of glutarate (GA) to L-2-hydroxyglutarate (L2HG). Functions in a L-lysine degradation pathway that proceeds via cadaverine, glutarate and L-2-hydroxyglutarate. The sequence is that of Glutarate 2-hydroxylase from Pseudomonas putida (strain ATCC 700007 / DSM 6899 / JCM 31910 / BCRC 17059 / LMG 24140 / F1).